We begin with the raw amino-acid sequence, 934 residues long: Sorting nexin-14 (934 aa).

2 consecutive transmembrane segments (helical) span residues 27–47 (YPVI…LNQY) and 48–68 (LHIL…YCSL). The region spanning 129–303 (PSKVDASISE…MVLIFIDDSP (175 aa)) is the PXA domain. One can recognise an RGS domain in the interval 335–467 (DLKEIREQQD…CHSDEYFRHL (133 aa)). Residues 557–677 (WTISIPYVDF…DFLSPFSMES (121 aa)) enclose the PX domain.

Belongs to the sorting nexin family.

It is found in the lysosome membrane. The protein localises to the late endosome membrane. The protein resides in the cell projection. It localises to the dendrite. Functionally, plays a role in maintaining normal neuronal excitability and synaptic transmission. May be involved in several stages of intracellular trafficking. Required for autophagosome clearance, possibly by mediating the fusion of lysosomes with autophagosomes. Binds phosphatidylinositol 3,5-bisphosphate (PtdIns(3,5)P2), a key component of late endosomes/lysosomes. Does not bind phosphatidylinositol 3-phosphate (PtdIns(3P)). In Danio rerio (Zebrafish), this protein is Sorting nexin-14.